A 502-amino-acid chain; its full sequence is Maturase K (502 aa).

Belongs to the intron maturase 2 family. MatK subfamily.

Its subcellular location is the plastid. It localises to the chloroplast. Its function is as follows. Usually encoded in the trnK tRNA gene intron. Probably assists in splicing its own and other chloroplast group II introns. In Ipomoea purpurea (Common morning glory), this protein is Maturase K.